We begin with the raw amino-acid sequence, 132 residues long: Small ribosomal subunit protein uS8 (132 aa).

It belongs to the universal ribosomal protein uS8 family. As to quaternary structure, part of the 30S ribosomal subunit. Contacts proteins S5 and S12.

Its function is as follows. One of the primary rRNA binding proteins, it binds directly to 16S rRNA central domain where it helps coordinate assembly of the platform of the 30S subunit. The sequence is that of Small ribosomal subunit protein uS8 from Streptomyces coelicolor (strain ATCC BAA-471 / A3(2) / M145).